The sequence spans 3354 residues: Cadherin-23 (3354 aa).

A signal peptide spans 1–23 (MRYSLVTCYAVLWLLMLVPGSWG). The Extracellular portion of the chain corresponds to 24 to 3064 (QVNRLPFFTN…SVQLPDDMSA (3041 aa)). Cadherin domains are found at residues 34–132 (HFFD…APTF), 133–236 (HNQP…DPIF), 237–348 (INLP…APEF), 349–460 (NSSE…RPIF), 461–561 (SQPL…VPTF), 562–671 (QKDA…PPTF), 672–784 (SKPA…APYY), 779–890 (KDAP…DPTF), 891–995 (RNLP…TPTF), 996–1102 (FPAV…RPIF), 1103–1208 (LQSS…APVF), 1210–1313 (QQQY…AVQF), 1314–1418 (SNAS…SPRF), 1420–1527 (FTSD…PPVI), 1529–1634 (SPFG…APVF), 1635–1744 (QQPH…VPTF), 1745–1851 (PRDY…DPVL), 1852–1959 (LNLP…HPLF), 1960–2069 (TEGT…WPTF), 2070–2174 (SPPT…RPEF), 2175–2293 (LNPI…TPQF), 2297–2402 (GITY…NPIF), 2403–2509 (DQPS…RPQF), 2510–2611 (SKPQ…RPVF), 2614–2722 (PPNG…EPLF), 2729–2846 (SPQY…PPRF), and 2847–2975 (TKAE…EEEF). N-linked (GlcNAc...) asparagine glycans are attached at residues N155 and N206. N349, N393, N434, N466, N472, N602, N694, N765, N810, N827, N941, N1001, N1018, N1171, N1282, N1315, N1473, N1534, N1651, N1667, N1818, N1857, N1889, N1902, N2014, N2050, N2129, N2168, N2195, N2263, N2357, and N2369 each carry an N-linked (GlcNAc...) asparagine glycan. 8 N-linked (GlcNAc...) asparagine glycosylation sites follow: N2578, N2616, N2749, N2808, N2877, N2896, N2941, and N2981. The helical transmembrane segment at 3065–3085 (LQMAIIVLAILLFLAAMLFVL) threads the bilayer. Residues 3086-3354 (MNWYYRTIHK…MESPLEITEL (269 aa)) are Cytoplasmic-facing.

In terms of assembly, interacts with USH1C and USH1G. antiparallel heterodimer with PCDH15. Isoform C1: Interacts with CAMSAP3; leading to inhibit CAMSAP3 ability to induce microtubule bundle formation. As to expression, in adult animals relatively high levels of expression are found in testis, skeletal muscle, heart, eye and thymus, and lower expression in kidney, lung and brain. Found in the sensory hair cells of the inner ear.

The protein localises to the cell membrane. In terms of biological role, cadherins are calcium-dependent cell adhesion proteins. They preferentially interact with themselves in a homophilic manner in connecting cells. CDH23 is required for establishing and/or maintaining the proper organization of the stereocilia bundle of hair cells in the cochlea and the vestibule during late embryonic/early postnatal development. It is part of the functional network formed by USH1C, USH1G, CDH23 and MYO7A that mediates mechanotransduction in cochlear hair cells. Required for normal hearing. The chain is Cadherin-23 (Cdh23) from Mus musculus (Mouse).